Here is a 241-residue protein sequence, read N- to C-terminus: Demethylmenaquinone methyltransferase (241 aa).

The S-adenosyl-L-methionine site is built by Thr73 and Asp92.

It belongs to the class I-like SAM-binding methyltransferase superfamily. MenG/UbiE family.

The enzyme catalyses a 2-demethylmenaquinol + S-adenosyl-L-methionine = a menaquinol + S-adenosyl-L-homocysteine + H(+). The protein operates within quinol/quinone metabolism; menaquinone biosynthesis; menaquinol from 1,4-dihydroxy-2-naphthoate: step 2/2. Methyltransferase required for the conversion of demethylmenaquinol (DMKH2) to menaquinol (MKH2). The polypeptide is Demethylmenaquinone methyltransferase (Chlorobaculum parvum (strain DSM 263 / NCIMB 8327) (Chlorobium vibrioforme subsp. thiosulfatophilum)).